Here is a 242-residue protein sequence, read N- to C-terminus: Tryptophan synthase alpha chain (242 aa).

Residues glutamate 31 and aspartate 42 each act as proton acceptor in the active site.

The protein belongs to the TrpA family. As to quaternary structure, tetramer of two alpha and two beta chains.

It catalyses the reaction (1S,2R)-1-C-(indol-3-yl)glycerol 3-phosphate + L-serine = D-glyceraldehyde 3-phosphate + L-tryptophan + H2O. The protein operates within amino-acid biosynthesis; L-tryptophan biosynthesis; L-tryptophan from chorismate: step 5/5. Functionally, the alpha subunit is responsible for the aldol cleavage of indoleglycerol phosphate to indole and glyceraldehyde 3-phosphate. The sequence is that of Tryptophan synthase alpha chain from Staphylococcus aureus (strain Mu3 / ATCC 700698).